The sequence spans 184 residues: ATP synthase subunit b, chloroplastic (184 aa).

The chain crosses the membrane as a helical span at residues 27–49 (LATNLINLSVVFGVLIFFGKGVL).

This sequence belongs to the ATPase B chain family. As to quaternary structure, F-type ATPases have 2 components, F(1) - the catalytic core - and F(0) - the membrane proton channel. F(1) has five subunits: alpha(3), beta(3), gamma(1), delta(1), epsilon(1). F(0) has four main subunits: a(1), b(1), b'(1) and c(10-14). The alpha and beta chains form an alternating ring which encloses part of the gamma chain. F(1) is attached to F(0) by a central stalk formed by the gamma and epsilon chains, while a peripheral stalk is formed by the delta, b and b' chains.

The protein localises to the plastid. Its subcellular location is the chloroplast thylakoid membrane. Its function is as follows. F(1)F(0) ATP synthase produces ATP from ADP in the presence of a proton or sodium gradient. F-type ATPases consist of two structural domains, F(1) containing the extramembraneous catalytic core and F(0) containing the membrane proton channel, linked together by a central stalk and a peripheral stalk. During catalysis, ATP synthesis in the catalytic domain of F(1) is coupled via a rotary mechanism of the central stalk subunits to proton translocation. Functionally, component of the F(0) channel, it forms part of the peripheral stalk, linking F(1) to F(0). The chain is ATP synthase subunit b, chloroplastic from Aethionema cordifolium (Lebanon stonecress).